Here is a 339-residue protein sequence, read N- to C-terminus: Phosphoribosylformylglycinamidine cyclo-ligase (339 aa).

It belongs to the AIR synthase family.

Its subcellular location is the cytoplasm. It catalyses the reaction 2-formamido-N(1)-(5-O-phospho-beta-D-ribosyl)acetamidine + ATP = 5-amino-1-(5-phospho-beta-D-ribosyl)imidazole + ADP + phosphate + H(+). It functions in the pathway purine metabolism; IMP biosynthesis via de novo pathway; 5-amino-1-(5-phospho-D-ribosyl)imidazole from N(2)-formyl-N(1)-(5-phospho-D-ribosyl)glycinamide: step 2/2. The chain is Phosphoribosylformylglycinamidine cyclo-ligase from Streptococcus thermophilus (strain ATCC BAA-250 / LMG 18311).